An 800-amino-acid chain; its full sequence is Calmodulin-sensitive adenylate cyclase (800 aa).

A signal peptide spans methionine 1 to alanine 33. In terms of domain architecture, ATLF-like spans lysine 60–lysine 273. A catalytic CA1 region spans residues aspartate 294 to asparagine 349. The interval valine 350–threonine 489 is catalytic CB. Residue histidine 351 is the Proton acceptor of the active site. Residues alanine 490 to lysine 622 form a catalytic CA2 region. Mg(2+) contacts are provided by aspartate 491 and aspartate 493. 3',5'-cyclic AMP-binding positions include threonine 548 and histidine 577–threonine 579. Position 577 (histidine 577) interacts with Mg(2+). The interaction with calmodulin stretch occupies residues aspartate 623 to lysine 800.

The protein belongs to the adenylyl cyclase class-2 family. As to quaternary structure, interacts (via ATLF domain) with the cleaved form of protective antigen (PA-63) anthrax toxin; interaction is required for EF translocation into the host cytoplasm. Ca(2+) is required as a cofactor.

It is found in the secreted. The protein localises to the host cytoplasm. Its subcellular location is the host cytosol. The enzyme catalyses ATP = 3',5'-cyclic AMP + diphosphate. Host calmodulin is an absolute requirement for its activation. Inhibited by ethyl 5-aminopyrazolo[1,5-a]quinazoline-3-carboxylate. Its function is as follows. Edema factor (EF), which constitutes one of the three proteins composing the anthrax toxin, causes edema in the host. Acts as a calmodulin-dependent adenylyl cyclase by converting ATP to cAMP, leading to dramatic elevation of intracellular cAMP levels in the host, thereby causing edema. EF is not toxic by itself and only acts as an edema factor when associated with protective antigen (PA) to form the edema toxin (EdTx). Required for the survival of germinated spores within macrophages at the early stages of infection. This chain is Calmodulin-sensitive adenylate cyclase (cya), found in Bacillus anthracis.